The primary structure comprises 249 residues: Diaminopimelate epimerase (249 aa).

Positions 11 and 60 each coordinate substrate. Residue C69 is the Proton donor of the active site. Residues 70–71 (GN), N164, and 182–183 (ER) contribute to the substrate site. Catalysis depends on C192, which acts as the Proton acceptor. 193–194 (GT) contacts substrate.

This sequence belongs to the diaminopimelate epimerase family. Homodimer.

The protein localises to the cytoplasm. It catalyses the reaction (2S,6S)-2,6-diaminopimelate = meso-2,6-diaminopimelate. It functions in the pathway amino-acid biosynthesis; L-lysine biosynthesis via DAP pathway; DL-2,6-diaminopimelate from LL-2,6-diaminopimelate: step 1/1. Functionally, catalyzes the stereoinversion of LL-2,6-diaminopimelate (L,L-DAP) to meso-diaminopimelate (meso-DAP), a precursor of L-lysine and an essential component of the bacterial peptidoglycan. The chain is Diaminopimelate epimerase from Campylobacter jejuni subsp. jejuni serotype O:23/36 (strain 81-176).